Consider the following 1024-residue polypeptide: NLR family CARD domain-containing protein 4 (1024 aa).

Positions 1-88 (MNFIKDNSRA…PLFQDLNGQS (88 aa)) constitute a CARD domain. The tract at residues 95–298 (EGDLDDLAQD…QFGALTAEVG (204 aa)) is nucleotide-binding domain (NBD). The region spanning 163–476 (SPCIIEGESG…VTKGNGYLQK (314 aa)) is the NACHT domain. Position 169–176 (169–176 (GESGKGKS)) interacts with ATP. Residues 356–463 (SHTQTTLFHT…RLSSLLTSHE (108 aa)) are winged-helix domain (WHD). Ser-533 bears the Phosphoserine mark. LRR repeat units follow at residues 578-598 (FFQGKSLYINSGNIPDYLFDF), 656-679 (KQEFRTLEVTLRDFSKLNKQDIRY), 735-758 (VTNLKTLSIHDLQNQRLPGGLTDS), 762-785 (LKNLTKLIMDNIKMNEEDAIKLAE), 787-812 (LKNLKKMCLFHLTHLSDIGEGMDYIV), 824-847 (EIQLVSCCLSANAVKILAQNLHNL), 848-870 (VKLSILDLSENYLEKDGNEALHE), 878-902 (LEQLTALMLPWGCDVQGSLSSLLKH), 911-933 (KLGLKNWRLTDTEIRILGAFFGK), 936-963 (LKNFQQLNLAGNRVSSDGWLAFMGVFEN), 965-985 (KQLVFFDFSTKEFLPDPALVR), and 999-1021 (EARLVGWQFDDDDLSVITGAFKL).

Homooligomer; homooligomerizes to induce formation of the NLRC4 inflammasome. Homooligomerizes following activation by pathogenic proteins. Component of the NLRC4 inflammasome, at least composed of NLRC4 and caspase-1 (CASP1). Some NLRC4 inflammasomes contain PYCARD/ASC, while some others directly contact and activate CASP1. Interacts (via CARD domain) with PYCARD/ASC, pro-caspase-1 (CASP1), NOD2, BCL10 and NALP1 (NAC) by CARD-CARD interaction. Interacts with EIF2AK2/PKR. Post-translationally, phosphorylated at Ser-533 following infection of macrophages with S.typhimurium (Salmonella). Phosphorylation is essential for NLRC4 inflammasome function to promote caspase-1 activation and pyroptosis. PRKCD phosphorylates Ser-533 in vitro. In terms of tissue distribution, isoform 2 is expressed ubiquitously, although highly expressed in lung and spleen. Isoform 1 is highly expressed in lung, followed by leukocytes especially monocytes, lymph node, colon, brain, prostate, placenta, spleen, bone marrow and fetal liver. Isoform 4 is only detected in brain.

It is found in the cytoplasm. The protein resides in the cytosol. Its subcellular location is the inflammasome. Key component of inflammasomes that indirectly senses specific proteins from pathogenic bacteria and fungi and responds by assembling an inflammasome complex that promotes caspase-1 activation, cytokine production and macrophage pyroptosis. The NLRC4 inflammasome is activated as part of the innate immune response to a range of intracellular bacteria. This is NLR family CARD domain-containing protein 4 (NLRC4) from Homo sapiens (Human).